The following is a 234-amino-acid chain: Endonuclease V (234 aa).

The Mg(2+) site is built by Asp36 and Asp104.

The protein belongs to the endonuclease V family. The cofactor is Mg(2+).

The protein resides in the cytoplasm. It catalyses the reaction Endonucleolytic cleavage at apurinic or apyrimidinic sites to products with a 5'-phosphate.. Its function is as follows. DNA repair enzyme involved in the repair of deaminated bases. Selectively cleaves double-stranded DNA at the second phosphodiester bond 3' to a deoxyinosine leaving behind the intact lesion on the nicked DNA. This chain is Endonuclease V, found in Yersinia pestis.